The chain runs to 610 residues: UvrABC system protein C (610 aa).

A GIY-YIG domain is found at 16 to 94 (SQPGVYRMYD…IKLYQPRYNV (79 aa)). Residues 204 to 239 (DQVLTQLISRMETASQNLEFEEAARIRDQIQAVRRV) form the UVR domain.

This sequence belongs to the UvrC family. Interacts with UvrB in an incision complex.

Its subcellular location is the cytoplasm. Its function is as follows. The UvrABC repair system catalyzes the recognition and processing of DNA lesions. UvrC both incises the 5' and 3' sides of the lesion. The N-terminal half is responsible for the 3' incision and the C-terminal half is responsible for the 5' incision. This chain is UvrABC system protein C, found in Escherichia coli (strain UTI89 / UPEC).